Reading from the N-terminus, the 78-residue chain is Acyl carrier protein (78 aa).

Residues 2-77 (SDTEERVKKI…DAVKFIDKAS (76 aa)) form the Carrier domain. Position 37 is an O-(pantetheine 4'-phosphoryl)serine (Ser-37).

Belongs to the acyl carrier protein (ACP) family. In terms of processing, 4'-phosphopantetheine is transferred from CoA to a specific serine of apo-ACP by AcpS. This modification is essential for activity because fatty acids are bound in thioester linkage to the sulfhydryl of the prosthetic group.

The protein resides in the cytoplasm. Its pathway is lipid metabolism; fatty acid biosynthesis. Carrier of the growing fatty acid chain in fatty acid biosynthesis. The polypeptide is Acyl carrier protein (Bartonella bacilliformis (strain ATCC 35685 / KC583 / Herrer 020/F12,63)).